A 238-amino-acid polypeptide reads, in one-letter code: Probable transcriptional regulatory protein YeeN (238 aa).

This sequence belongs to the TACO1 family. YeeN subfamily.

It localises to the cytoplasm. The polypeptide is Probable transcriptional regulatory protein YeeN (Escherichia coli O157:H7).